Consider the following 466-residue polypeptide: Uronate isomerase (466 aa).

Belongs to the metallo-dependent hydrolases superfamily. Uronate isomerase family.

It catalyses the reaction D-glucuronate = D-fructuronate. The catalysed reaction is aldehydo-D-galacturonate = keto-D-tagaturonate. It participates in carbohydrate metabolism; pentose and glucuronate interconversion. The protein is Uronate isomerase of Brucella suis (strain ATCC 23445 / NCTC 10510).